A 62-amino-acid polypeptide reads, in one-letter code: Large ribosomal subunit protein eL24 (62 aa).

Zn(2+) is bound by residues cysteine 7, cysteine 10, cysteine 33, and cysteine 37. Residues cysteine 7–cysteine 37 form a C4-type zinc finger.

The protein belongs to the eukaryotic ribosomal protein eL24 family. As to quaternary structure, part of the 50S ribosomal subunit. Forms a cluster with proteins L3 and L14. The cofactor is Zn(2+).

Binds to the 23S rRNA. In Sulfolobus acidocaldarius (strain ATCC 33909 / DSM 639 / JCM 8929 / NBRC 15157 / NCIMB 11770), this protein is Large ribosomal subunit protein eL24.